We begin with the raw amino-acid sequence, 700 residues long: Methionine--tRNA ligase (700 aa).

The 'HIGH' region motif lies at 13-23 (PYANGDIHLGH). 4 residues coordinate Zn(2+): cysteine 144, cysteine 147, cysteine 157, and cysteine 160. The short motif at 341–345 (KMSKS) is the 'KMSKS' region element. Position 344 (lysine 344) interacts with ATP. The tract at residues 562-587 (QVGAPTASQDDKAAAKNTSPAAMPSS) is disordered. Polar residues predominate over residues 577 to 587 (KNTSPAAMPSS). One can recognise a tRNA-binding domain in the interval 598-700 (DFAKVEMKVA…DEAVIGDSLA (103 aa)).

This sequence belongs to the class-I aminoacyl-tRNA synthetase family. MetG type 1 subfamily. In terms of assembly, homodimer. Zn(2+) is required as a cofactor.

The protein resides in the cytoplasm. The catalysed reaction is tRNA(Met) + L-methionine + ATP = L-methionyl-tRNA(Met) + AMP + diphosphate. Is required not only for elongation of protein synthesis but also for the initiation of all mRNA translation through initiator tRNA(fMet) aminoacylation. This chain is Methionine--tRNA ligase, found in Psychrobacter cryohalolentis (strain ATCC BAA-1226 / DSM 17306 / VKM B-2378 / K5).